The sequence spans 548 residues: Membrane protein insertase YidC (548 aa).

Residues 6-26 form a helical membrane-spanning segment; the sequence is NLLVIALLFVSFMIWQAWEQD. The tract at residues 28 to 56 is disordered; sequence NPQPQTQQTTQTTTTAAGSAADQGVPASG. Low complexity predominate over residues 29-42; that stretch reads PQPQTQQTTQTTTT. A run of 4 helical transmembrane segments spans residues 350–370, 424–444, 458–478, and 499–519; these read FVGNWGFSIIIITFIVRGIMY, FPLIIQMPIFLALYYMLMGSI, LSAQDPYYILPILMGVTMFFI, and PVIFTVFFLWFPSGLVLYYIV.

This sequence belongs to the OXA1/ALB3/YidC family. Type 1 subfamily. Interacts with the Sec translocase complex via SecD. Specifically interacts with transmembrane segments of nascent integral membrane proteins during membrane integration.

The protein localises to the cell inner membrane. Required for the insertion and/or proper folding and/or complex formation of integral membrane proteins into the membrane. Involved in integration of membrane proteins that insert both dependently and independently of the Sec translocase complex, as well as at least some lipoproteins. Aids folding of multispanning membrane proteins. This is Membrane protein insertase YidC from Salmonella enteritidis PT4 (strain P125109).